We begin with the raw amino-acid sequence, 266 residues long: MAMYMPSTASSTTHIRSPSGTPIDSPHEMTRSPSAEPSKPAKRKGTRSVSTLTPSQLARKRANDREAQRAIRARTKEHIERLEREVEELKSKQNRDETLQELIRKNKYLEKEIARLRETYGIPTPPTSHPYAPSIYDDSAVSSRTSSSFGQHSPDYHQVGEYGASYMTTPEPSEPWTSVLPCSNVSSPASSGSAEEYGYIPTSVPAGIEGLPPTSRVGACMKYEDMDNENGYPRSNGVPMPPTYMHQQQWPVPYSATVYYPQSPAL.

Residues methionine 1 to alanine 73 form a disordered region. Composition is skewed to polar residues over residues serine 7–proline 22 and arginine 47–glutamine 56. The region spanning proline 54 to arginine 95 is the bZIP domain. The interval arginine 59–arginine 81 is basic motif. The span at arginine 61–alanine 73 shows a compositional bias: basic and acidic residues. The tract at residues leucine 82 to leucine 89 is leucine-zipper.

The protein belongs to the bZIP family. As to expression, expressed in appressoria.

The protein localises to the nucleus. Transcription factor that is required for infection of plants hosts. Is not implicated in the development of appressoria or the subsequent penetration of host leaves, but is necessary for the initial establishment of the fungus within plant cells by orchestrating the expression of a unique set of early invasion-related genes within appressoria, encoding secreted effectors, enzymes, secondary metabolism-related enzymes, and signaling membrane receptors. Controls the expression of targeted genes by interacting directly with a 5'-TGACTC-3' motif present in their promoters. The chain is Transcription factor BIP1 from Pyricularia oryzae (strain 70-15 / ATCC MYA-4617 / FGSC 8958) (Rice blast fungus).